A 145-amino-acid chain; its full sequence is Large ribosomal subunit protein bL35c (145 aa).

A chloroplast-targeting transit peptide spans Met1–Val56.

The protein belongs to the bacterial ribosomal protein bL35 family. In terms of assembly, part of the 50S ribosomal subunit.

The protein localises to the plastid. It is found in the chloroplast. This is Large ribosomal subunit protein bL35c from Arabidopsis thaliana (Mouse-ear cress).